Reading from the N-terminus, the 173-residue chain is MSIILGVDPGSRITGYGVIQCIGRHQTYLGSGCIRTASDDLPYRLKQIFDGVSEIIRQYQPDEFAIERVFMAKNADSALKLGQARGAAIVAATNADLPVAEYSATQIKSAVVGTGKAQKSQVQHMVQQILKLPAAPQADAADALGVAICHFHTSQSLIALGGRANARTYGRYR.

Active-site residues include Asp8, Glu67, and Asp139. Residues Asp8, Glu67, and Asp139 each coordinate Mg(2+).

It belongs to the RuvC family. As to quaternary structure, homodimer which binds Holliday junction (HJ) DNA. The HJ becomes 2-fold symmetrical on binding to RuvC with unstacked arms; it has a different conformation from HJ DNA in complex with RuvA. In the full resolvosome a probable DNA-RuvA(4)-RuvB(12)-RuvC(2) complex forms which resolves the HJ. Requires Mg(2+) as cofactor.

It localises to the cytoplasm. It catalyses the reaction Endonucleolytic cleavage at a junction such as a reciprocal single-stranded crossover between two homologous DNA duplexes (Holliday junction).. Functionally, the RuvA-RuvB-RuvC complex processes Holliday junction (HJ) DNA during genetic recombination and DNA repair. Endonuclease that resolves HJ intermediates. Cleaves cruciform DNA by making single-stranded nicks across the HJ at symmetrical positions within the homologous arms, yielding a 5'-phosphate and a 3'-hydroxyl group; requires a central core of homology in the junction. The consensus cleavage sequence is 5'-(A/T)TT(C/G)-3'. Cleavage occurs on the 3'-side of the TT dinucleotide at the point of strand exchange. HJ branch migration catalyzed by RuvA-RuvB allows RuvC to scan DNA until it finds its consensus sequence, where it cleaves and resolves the cruciform DNA. The sequence is that of Crossover junction endodeoxyribonuclease RuvC from Shewanella sediminis (strain HAW-EB3).